The primary structure comprises 402 residues: Phosphoglycerate kinase (402 aa).

Residues 24-26 (DFN), Arg40, 63-66 (HFGR), Arg122, and Arg155 each bind substrate. ATP-binding positions include Lys206, Gly297, Glu328, and 357–360 (GGDS).

This sequence belongs to the phosphoglycerate kinase family. In terms of assembly, monomer.

The protein localises to the cytoplasm. It carries out the reaction (2R)-3-phosphoglycerate + ATP = (2R)-3-phospho-glyceroyl phosphate + ADP. It participates in carbohydrate degradation; glycolysis; pyruvate from D-glyceraldehyde 3-phosphate: step 2/5. The sequence is that of Phosphoglycerate kinase from Synechococcus sp. (strain ATCC 27144 / PCC 6301 / SAUG 1402/1) (Anacystis nidulans).